A 375-amino-acid chain; its full sequence is DNA replication and repair protein RecF (375 aa).

Position 30 to 37 (30 to 37 (GENAQGKT)) interacts with ATP.

It belongs to the RecF family.

It is found in the cytoplasm. The RecF protein is involved in DNA metabolism; it is required for DNA replication and normal SOS inducibility. RecF binds preferentially to single-stranded, linear DNA. It also seems to bind ATP. The chain is DNA replication and repair protein RecF from Bacillus mycoides (strain KBAB4) (Bacillus weihenstephanensis).